The sequence spans 85 residues: Kappa-theraphotoxin-Gr1a (85 aa).

An N-terminal signal peptide occupies residues 1–21; that stretch reads MKTSVFAAILGLALFAVLCSG. A propeptide spanning residues 22–49 is cleaved from the precursor; that stretch reads SELQEKDLKETLLSAIMETALEAQPEER. 3 disulfides stabilise this stretch: cysteine 51–cysteine 65, cysteine 58–cysteine 70, and cysteine 64–cysteine 77. Positions 53–55 are involved in active face; that stretch reads YLF.

Belongs to the neurotoxin 10 (Hwtx-1) family. 09 (HaTx) subfamily. Expressed by the venom gland.

It localises to the secreted. Its function is as follows. Inhibits Kv2.1/KCNB1 and Kv4.2/KCND2 voltage-gated potassium channels. Acts as a gating modifier by shifting channel openings to more depolarized voltages and acts via the occupancy of multiple binding sites on the channel. The toxin binding sites are situated on the S3-S4 extracellular linker of the channel. At least two hanatoxin molecules can occupy the Kv2.1/KCNB1 channel, and maybe more (three or four). Can also inhibit calcium channels (Cav2.1/CACNA1A). Needs to partition into the membrane in order to bind to the channel. The protein is Kappa-theraphotoxin-Gr1a of Grammostola rosea (Chilean rose tarantula).